A 185-amino-acid polypeptide reads, in one-letter code: ATP-dependent protease subunit HslV (185 aa).

Threonine 12 is an active-site residue. Residues alanine 168, cysteine 171, and threonine 174 each contribute to the Na(+) site.

This sequence belongs to the peptidase T1B family. HslV subfamily. In terms of assembly, a double ring-shaped homohexamer of HslV is capped on each side by a ring-shaped HslU homohexamer. The assembly of the HslU/HslV complex is dependent on binding of ATP.

The protein resides in the cytoplasm. The enzyme catalyses ATP-dependent cleavage of peptide bonds with broad specificity.. Its activity is regulated as follows. Allosterically activated by HslU binding. Its function is as follows. Protease subunit of a proteasome-like degradation complex believed to be a general protein degrading machinery. The polypeptide is ATP-dependent protease subunit HslV (Ruegeria pomeroyi (strain ATCC 700808 / DSM 15171 / DSS-3) (Silicibacter pomeroyi)).